The following is an 838-amino-acid chain: Probable inorganic carbon transporter subunit DabA (838 aa).

Residues Cys353, Asp355, His537, and Cys552 each contribute to the Zn(2+) site.

This sequence belongs to the inorganic carbon transporter (TC 9.A.2) DabA family. In terms of assembly, forms a complex with DabB. It depends on Zn(2+) as a cofactor.

The protein resides in the cell membrane. In terms of biological role, part of an energy-coupled inorganic carbon pump. The polypeptide is Probable inorganic carbon transporter subunit DabA (Roseiflexus sp. (strain RS-1)).